Here is a 304-residue protein sequence, read N- to C-terminus: Porphobilinogen deaminase (304 aa).

At cysteine 240 the chain carries S-(dipyrrolylmethanemethyl)cysteine.

Belongs to the HMBS family. Monomer. Dipyrromethane is required as a cofactor.

The enzyme catalyses 4 porphobilinogen + H2O = hydroxymethylbilane + 4 NH4(+). Its pathway is porphyrin-containing compound metabolism; protoporphyrin-IX biosynthesis; coproporphyrinogen-III from 5-aminolevulinate: step 2/4. Tetrapolymerization of the monopyrrole PBG into the hydroxymethylbilane pre-uroporphyrinogen in several discrete steps. This is Porphobilinogen deaminase from Xanthomonas euvesicatoria pv. vesicatoria (strain 85-10) (Xanthomonas campestris pv. vesicatoria).